Here is a 96-residue protein sequence, read N- to C-terminus: MRAIIFVLIFAIAFAATREGAILCNLCKDTVKLVENLLTVDGAQAVRQYIDNLCGKASGFLGTLCEKILSFGVDELVKLIENHVDPVVVCEKIHAC.

The N-terminal stretch at 1–19 (MRAIIFVLIFAIAFAATRE) is a signal peptide. Positions 20–96 (GAILCNLCKD…VVVCEKIHAC (77 aa)) constitute a Saposin B-type domain. Intrachain disulfides connect cysteine 24/cysteine 96, cysteine 27/cysteine 90, and cysteine 54/cysteine 65.

Monomer. Homodimer. Hexamer; formed during insertion in the membrane.

It localises to the cytoplasmic granule. Forms pores in the cell membrane of host cells. Has antibacterial activity against M.luteus, no activity against E.coli. Implicated in the cytolytic activity of the parasite. This Entamoeba histolytica (strain ATCC 30459 / HM-1:IMSS / ABRM) protein is Pore-forming peptide amoebapore B.